The primary structure comprises 62 residues: MKTIVILFVLALVFCTLEMGMVEAGFGCPFNQGKCHRHCRSIRRRGGYCDGFLKQRCVCYRK.

The first 24 residues, 1–24, serve as a signal peptide directing secretion; that stretch reads MKTIVILFVLALVFCTLEMGMVEA. Cystine bridges form between C28–C49, C35–C57, and C39–C59.

This sequence belongs to the invertebrate defensin family. Type 2 subfamily. In terms of tissue distribution, low expression in both venom and non-venom glands (hemolymph).

The protein resides in the secreted. Antibacterial peptide active against Gram-positive bacteria (including S.aureus ATCC25923 (MIC=2.5 uM), M.luteus AB93113 (MIC=2.5 uM), and the antibiotic-resistant S.epidermidis PRSE P1389 (MIC=1.25 uM)), but not against Gram-negative bacteria (including E.coli and P.aeruginosa). Also blocks the currents of Kv1.1/KCNA1 (57% inhibition), Kv1.2/KCNA2 (27.5% inhibition), Kv1.3/KCNA3 (IC(50)=23.4 nM, 84.3% inhibition), KCa3.1/KCNN4/IK (15% inhibition), KCa2.3/KCNN3/SK3 (87.5% inhibition) and Kv11.1/KCNH2/ERG1 (30.4% inhibition) channels (tested at 1 uM). It inhibits potassium channel current by interacting with the pore region. This is Defensin BmKDfsin3 from Olivierus martensii (Manchurian scorpion).